A 356-amino-acid polypeptide reads, in one-letter code: Phenylalanine dehydrogenase (356 aa).

Residue Arg-43 participates in NAD(+) binding. Lys-67 contributes to the L-phenylalanine binding site. Lys-79 functions as the Proton donor/acceptor in the catalytic mechanism. 118 to 119 provides a ligand contact to L-phenylalanine; sequence PD. NAD(+) is bound by residues Asp-119, Ser-150, Thr-154, 183-189, 206-207, Arg-211, 240-241, and 261-263; these read GLGAVGG, DT, AM, and AAN. Asn-263 lines the L-phenylalanine pocket.

It belongs to the Glu/Leu/Phe/Val dehydrogenases family. Homotetramer, dimer of dimers.

It catalyses the reaction L-phenylalanine + NAD(+) + H2O = 3-phenylpyruvate + NH4(+) + NADH + H(+). It functions in the pathway amino-acid biosynthesis; L-phenylalanine biosynthesis; L-phenylalanine from phenylpyruvate (PDH route): step 1/1. Its activity is regulated as follows. Subject to competitive inhibition by 3-phenylpropionate for the conversion of L-phenylalanine to phenylpyruvate. Subject to competitive inhibition by D-phenylalanine for the conversion of phenylpyruvate to L-phenylalanine. Its function is as follows. Catalyzes the reversible NAD(+)-dependent oxidative deamination of L-phenylalanine to phenylpyruvate. The chain is Phenylalanine dehydrogenase from Rhodococcus sp.